A 404-amino-acid chain; its full sequence is D-galactonate dehydratase family member Ent638_1932 (404 aa).

Residues Asn-37 and His-122 each coordinate substrate. Residue Tyr-159 is the Proton donor/acceptor of the active site. Residue Asp-212 participates in Mg(2+) binding. The active-site Proton donor/acceptor is the His-214. Mg(2+) is bound by residues Glu-238 and Glu-264. Positions 264, 285, 314, 318, and 341 each coordinate substrate.

Belongs to the mandelate racemase/muconate lactonizing enzyme family. GalD subfamily. The cofactor is Mg(2+).

It carries out the reaction D-mannonate = 2-dehydro-3-deoxy-D-gluconate + H2O. In terms of biological role, has low D-mannonate dehydratase activity (in vitro), suggesting that this is not a physiological substrate and that it has no significant role in D-mannonate degradation in vivo. Has no detectable activity with a panel of 70 other acid sugars (in vitro). This is D-galactonate dehydratase family member Ent638_1932 from Enterobacter sp. (strain 638).